Consider the following 53-residue polypeptide: Membrane antigen containing repeating peptides (53 aa).

6 consecutive repeat copies span residues 1–10 (EAEEAARLQA), 11–20 (EAEEAARQQA), 21–30 (EAEEAARLQA), 31–40 (EAEEAARLQA), 41–50 (EAEEAARLQA), and 51–53 (EAE). The 6 X 10 AA tandem repeats stretch occupies residues 1-53 (EAEEAARLQAEAEEAARQQAEAEEAARLQAEAEEAARLQAEAEEAARLQAEAE). Residues 1-53 (EAEEAARLQAEAEEAARQQAEAEEAARLQAEAEEAARLQAEAEEAARLQAEAE) are disordered.

The protein resides in the membrane. The protein is Membrane antigen containing repeating peptides of Leishmania major.